The sequence spans 159 residues: Ribosomal RNA large subunit methyltransferase H (159 aa).

Residues leucine 76, glycine 108, and 127–132 (FSKMTF) contribute to the S-adenosyl-L-methionine site.

It belongs to the RNA methyltransferase RlmH family. In terms of assembly, homodimer.

It is found in the cytoplasm. It carries out the reaction pseudouridine(1915) in 23S rRNA + S-adenosyl-L-methionine = N(3)-methylpseudouridine(1915) in 23S rRNA + S-adenosyl-L-homocysteine + H(+). Functionally, specifically methylates the pseudouridine at position 1915 (m3Psi1915) in 23S rRNA. This chain is Ribosomal RNA large subunit methyltransferase H, found in Clostridium botulinum (strain 657 / Type Ba4).